A 312-amino-acid chain; its full sequence is MIEFEKPIITKIDENKDYGKFVIEPLERGYGTTLGNSLRRVLLSSLPGAAVTSIKIDGVLHEFDTVPGVREDVMQIILNIKGLAVKSYVEDEKTIELDVQGPAEVTAGDILTDSDIEIVNPDHYLFTIAEGASFQATMTVSTNRGYVPAEENKKDDAPVGTLAVDSIYTPVKKVNYQVEPARVGSNDGFDKLTIEIVTNGTIIPEDALGLSARILIEHLNLFTDLTDVAKATDVMKETEKVNDEKLLDRTIEELDLSVRSYNCLKRAGINTVHDLTEKTEPEMMKVRNLGRKSLEEVKVKLADLGLGLKNDK.

An alpha N-terminal domain (alpha-NTD) region spans residues 1–226 (MIEFEKPIIT…EHLNLFTDLT (226 aa)). The tract at residues 242–312 (NDEKLLDRTI…DLGLGLKNDK (71 aa)) is alpha C-terminal domain (alpha-CTD).

The protein belongs to the RNA polymerase alpha chain family. In terms of assembly, homodimer. The RNAP catalytic core consists of 2 alpha, 1 beta, 1 beta' and 1 omega subunit. When a sigma factor is associated with the core the holoenzyme is formed, which can initiate transcription.

It catalyses the reaction RNA(n) + a ribonucleoside 5'-triphosphate = RNA(n+1) + diphosphate. In terms of biological role, DNA-dependent RNA polymerase catalyzes the transcription of DNA into RNA using the four ribonucleoside triphosphates as substrates. The chain is DNA-directed RNA polymerase subunit alpha from Streptococcus thermophilus (strain CNRZ 1066).